Here is a 124-residue protein sequence, read N- to C-terminus: Large ribosomal subunit protein bL12 (124 aa).

The protein belongs to the bacterial ribosomal protein bL12 family. As to quaternary structure, homodimer. Part of the ribosomal stalk of the 50S ribosomal subunit. Forms a multimeric L10(L12)X complex, where L10 forms an elongated spine to which 2 to 4 L12 dimers bind in a sequential fashion. Binds GTP-bound translation factors.

Forms part of the ribosomal stalk which helps the ribosome interact with GTP-bound translation factors. Is thus essential for accurate translation. The chain is Large ribosomal subunit protein bL12 from Campylobacter fetus subsp. fetus (strain 82-40).